Reading from the N-terminus, the 444-residue chain is Ribitol-5-phosphate xylosyltransferase 1 (444 aa).

Topologically, residues 1 to 9 are cytoplasmic; sequence MRLTRTRLC. Residues 10 to 30 form a helical; Signal-anchor for type II membrane protein membrane-spanning segment; it reads SLLVALYCLFSIYAAYHVFFG. At 31 to 444 the chain is on the extracellular side; it reads RRRRPLGTTS…ESSFFINNKV (414 aa). Residues 38-79 form a disordered region; sequence TTSRNSRKAAAAQAKERRGREQSALESEEWNPWEGDEKNEQR. Over residues 51–60 the composition is skewed to basic and acidic residues; that stretch reads AKERRGREQS.

This sequence belongs to the RXYLT1 family. In terms of assembly, forms a complex composed of FKTN/fukutin, FKRP and RXYLT1/TMEM5.

It is found in the golgi apparatus membrane. It catalyses the reaction 3-O-[Rib-ol-P-Rib-ol-P-3-beta-D-GalNAc-(1-&gt;3)-beta-D-GlcNAc-(1-&gt;4)-(O-6-P-alpha-D-Man)]-Thr-[protein] + UDP-alpha-D-xylose = 3-O-[beta-D-Xyl-(1-&gt;4)-Rib-ol-P-Rib-ol-P-3-beta-D-GalNAc-(1-&gt;3)-beta-D-GlcNAc-(1-&gt;4)-(O-6-P-alpha-D-Man)]-Thr-[protein] + UDP + H(+). It functions in the pathway protein modification; protein glycosylation. In terms of biological role, acts as a UDP-D-xylose:ribitol-5-phosphate beta1,4-xylosyltransferase, which catalyzes the transfer of UDP-D-xylose to ribitol 5-phosphate (Rbo5P) to form the Xylbeta1-4Rbo5P linkage on O-mannosyl glycan. Participates in the biosynthesis of the phosphorylated O-mannosyl trisaccharide (N-acetylgalactosamine-beta-3-N-acetylglucosamine-beta-4-(phosphate-6-)mannose), a carbohydrate structure present in alpha-dystroglycan (DAG1), which is required for binding laminin G-like domain-containing extracellular proteins with high affinity. This Mus musculus (Mouse) protein is Ribitol-5-phosphate xylosyltransferase 1.